Here is a 306-residue protein sequence, read N- to C-terminus: Pyridoxal 5'-phosphate synthase subunit PdxS (306 aa).

Aspartate 36 serves as a coordination point for D-ribose 5-phosphate. Lysine 93 functions as the Schiff-base intermediate with D-ribose 5-phosphate in the catalytic mechanism. Residue glycine 165 coordinates D-ribose 5-phosphate. Residue arginine 177 participates in D-glyceraldehyde 3-phosphate binding. Residues glycine 226 and glycine 247–serine 248 each bind D-ribose 5-phosphate.

The protein belongs to the PdxS/SNZ family. In terms of assembly, in the presence of PdxT, forms a dodecamer of heterodimers.

It carries out the reaction aldehydo-D-ribose 5-phosphate + D-glyceraldehyde 3-phosphate + L-glutamine = pyridoxal 5'-phosphate + L-glutamate + phosphate + 3 H2O + H(+). Its pathway is cofactor biosynthesis; pyridoxal 5'-phosphate biosynthesis. Functionally, catalyzes the formation of pyridoxal 5'-phosphate from ribose 5-phosphate (RBP), glyceraldehyde 3-phosphate (G3P) and ammonia. The ammonia is provided by the PdxT subunit. Can also use ribulose 5-phosphate and dihydroxyacetone phosphate as substrates, resulting from enzyme-catalyzed isomerization of RBP and G3P, respectively. The sequence is that of Pyridoxal 5'-phosphate synthase subunit PdxS from Corynebacterium urealyticum (strain ATCC 43042 / DSM 7109).